The sequence spans 489 residues: Protein LMBR1L (489 aa).

Over 1–21 (MEAADYEVLSVREQLFHDRVR) the chain is Extracellular. The tract at residues 1 to 59 (MEAADYEVLSVREQLFHDRVRECIISILLFATLYILCHIFLTRFKKPAEFTTVDDEDAT) is interaction with LGB. The LCN1-binding stretch occupies residues 1–76 (MEAADYEVLS…LCTFTLAVAL (76 aa)). A helical transmembrane segment spans residues 22 to 42 (ECIISILLFATLYILCHIFLT). Over 43 to 66 (RFKKPAEFTTVDDEDATVNKIALE) the chain is Cytoplasmic. A helical transmembrane segment spans residues 67–87 (LCTFTLAVALGAVLLLPFSII). Topologically, residues 88 to 114 (SNEVLLSLPRNYYIQWLNGSLIHGLWN) are extracellular. A helical membrane pass occupies residues 115–135 (LVFLFSNLSLVFLMPFAYFFT). Topologically, residues 136–154 (ESEGFAGSRKGVLGRVYET) are cytoplasmic. Residues 155-175 (VVMLILLTLLVLGMVWVASAI) traverse the membrane as a helical segment. Topologically, residues 176 to 196 (VDNDKASRESLYDFWEYYLPY) are extracellular. The chain crosses the membrane as a helical span at residues 197 to 217 (LYSCISFLGVLLLLVCTPLGL). Residues 218–305 (ARMFSVTGKL…NLGYPLAMLC (88 aa)) are Cytoplasmic-facing. The helical transmembrane segment at 306–326 (LLVLTGLSVLIVAVHILELLI) threads the bilayer. Residues 327–350 (DEAAMPRGMQDAALGQASFSKLGS) lie on the Extracellular side of the membrane. A helical membrane pass occupies residues 351-371 (FGAIIQVVLIFYLMVSSVVGF). The Cytoplasmic portion of the chain corresponds to 372-388 (YSSPLFGSLRPRWHDTS). The chain crosses the membrane as a helical span at residues 389–409 (MTQIIGNCVCLLVLSSALPVF). Residues 410–431 (SRTLGLTRFDLLGDFGRFNWLG) are Extracellular-facing. A helical membrane pass occupies residues 432–452 (NFYIVFLYNAAFAGLTTLCLV). The Cytoplasmic portion of the chain corresponds to 453–489 (KTFTAAVRAELIRAFGLDRLPLPVSGFPRASRKKQHQ).

It belongs to the LIMR family. As to quaternary structure, dimer. Can also form higher oligomers. Interacts with LCN1; this interaction mediates the endocytosis of LCN1. Interacts with UBAC2, FAF2, VCP, AMFR, ZNRF3, CTNNB1, LRP6, GSK3B, FZD6, DVL2 and RNF43. Interacts with GSK3A. Interaction with LGB and SCGB1A1 is controversial. In terms of tissue distribution, highly expressed in the bone marrow, thymus, spleen and lymphocytes.

It localises to the cell membrane. The protein localises to the endoplasmic reticulum membrane. Its function is as follows. Plays an essential role in lymphocyte development by negatively regulating the canonical Wnt signaling pathway. In association with UBAC2 and E3 ubiquitin-protein ligase AMFR, promotes the ubiquitin-mediated degradation of CTNNB1 and Wnt receptors FZD6 and LRP6. LMBR1L stabilizes the beta-catenin destruction complex that is required for regulating CTNNB1 levels. Acts as a LCN1 receptor and can mediate its endocytosis. This chain is Protein LMBR1L (Lmbr1l), found in Mus musculus (Mouse).